Reading from the N-terminus, the 100-residue chain is Urease subunit gamma (100 aa).

This sequence belongs to the urease gamma subunit family. Heterotrimer of UreA (gamma), UreB (beta) and UreC (alpha) subunits. Three heterotrimers associate to form the active enzyme.

It localises to the cytoplasm. It catalyses the reaction urea + 2 H2O + H(+) = hydrogencarbonate + 2 NH4(+). It participates in nitrogen metabolism; urea degradation; CO(2) and NH(3) from urea (urease route): step 1/1. This Azotobacter vinelandii (strain DJ / ATCC BAA-1303) protein is Urease subunit gamma.